The sequence spans 224 residues: uncharacterized protein (224 aa).

To M.tuberculosis Rv2558.

This is an uncharacterized protein from Mycobacterium tuberculosis (strain CDC 1551 / Oshkosh).